We begin with the raw amino-acid sequence, 268 residues long: 3-deoxy-manno-octulosonate cytidylyltransferase (268 aa).

The protein belongs to the KdsB family.

It is found in the cytoplasm. It carries out the reaction 3-deoxy-alpha-D-manno-oct-2-ulosonate + CTP = CMP-3-deoxy-beta-D-manno-octulosonate + diphosphate. Its pathway is nucleotide-sugar biosynthesis; CMP-3-deoxy-D-manno-octulosonate biosynthesis; CMP-3-deoxy-D-manno-octulosonate from 3-deoxy-D-manno-octulosonate and CTP: step 1/1. It functions in the pathway bacterial outer membrane biogenesis; lipopolysaccharide biosynthesis. In terms of biological role, activates KDO (a required 8-carbon sugar) for incorporation into bacterial lipopolysaccharide in Gram-negative bacteria. The polypeptide is 3-deoxy-manno-octulosonate cytidylyltransferase (Psychrobacter arcticus (strain DSM 17307 / VKM B-2377 / 273-4)).